A 258-amino-acid polypeptide reads, in one-letter code: Acyl-[acyl-carrier-protein]--UDP-N-acetylglucosamine O-acyltransferase (258 aa).

It belongs to the transferase hexapeptide repeat family. LpxA subfamily. In terms of assembly, homotrimer.

The protein localises to the cytoplasm. It carries out the reaction a (3R)-hydroxyacyl-[ACP] + UDP-N-acetyl-alpha-D-glucosamine = a UDP-3-O-[(3R)-3-hydroxyacyl]-N-acetyl-alpha-D-glucosamine + holo-[ACP]. It functions in the pathway glycolipid biosynthesis; lipid IV(A) biosynthesis; lipid IV(A) from (3R)-3-hydroxytetradecanoyl-[acyl-carrier-protein] and UDP-N-acetyl-alpha-D-glucosamine: step 1/6. Its function is as follows. Involved in the biosynthesis of lipid A, a phosphorylated glycolipid that anchors the lipopolysaccharide to the outer membrane of the cell. The chain is Acyl-[acyl-carrier-protein]--UDP-N-acetylglucosamine O-acyltransferase from Pseudomonas putida (strain W619).